Consider the following 116-residue polypeptide: MLSCRLQCALAALSIVLALGCVTGAPSDPRLRQFLQKSLAAAAGKQELAKYFLAELLSEPNQTENDALEPEDLSQAAEQDEMRLELQRSANSNPAMAPRERKAGCKNFFWKTFTSC.

Residues 1–24 form the signal peptide; it reads MLSCRLQCALAALSIVLALGCVTG. A propeptide spanning residues 25-88 is cleaved from the precursor; it reads APSDPRLRQF…QDEMRLELQR (64 aa). At Ala-43 the chain carries Alanine amide. The disordered stretch occupies residues 62 to 82; it reads QTENDALEPEDLSQAAEQDEM. A disulfide bridge connects residues Cys-105 and Cys-116.

The protein belongs to the somatostatin family. Post-translationally, C-terminal amidation of the neuronostatin peptide is required for its biological activity, including for the regulation of mean arterial pressure.

The protein resides in the secreted. Its function is as follows. Inhibits the secretion of pituitary hormones, including that of growth hormone/somatotropin (GH1), PRL, ACTH, luteinizing hormone (LH) and TSH. Also impairs ghrelin- and GnRH-stimulated secretion of GH1 and LH; the inhibition of ghrelin-stimulated secretion of GH1 can be further increased by neuronostatin. Functionally, may enhance low-glucose-induced glucagon release by pancreatic alpha cells. This effect may be mediated by binding to GPR107 and PKA activation. May regulate cardiac contractile function. May compromise cardiomyocyte viability. In the central nervous system, may impair memory retention and may affect hippocampal excitability. May also have anxiolytic and anorexigenic effects. May play a role in arterial pressure regulation. May inhibit basal, but not ghrelin- or GnRH-stimulated secretion of GH1 or LH, but does not affect the release of other pituitary hormones, including PRL, ACTH, FSH or TSH. Potentiates inhibitory action of somatostatin on ghrelin-stimulated secretion of GH1, but not that on GnRH-stimulated secretion of LH. The polypeptide is Somatostatin (SST) (Homo sapiens (Human)).